Here is a 172-residue protein sequence, read N- to C-terminus: Capsid protein (172 aa).

The protein belongs to the nanoviridae capsid protein family.

Its subcellular location is the virion. The protein is Capsid protein (DNA-S) of Astragalus sinicus (Chinese milk vetch).